Reading from the N-terminus, the 114-residue chain is Flagellar hook-basal body complex protein FliE (114 aa).

This sequence belongs to the FliE family.

The protein localises to the bacterial flagellum basal body. In Desulfitobacterium hafniense (strain DSM 10664 / DCB-2), this protein is Flagellar hook-basal body complex protein FliE.